The following is a 133-amino-acid chain: MRHGHGLRKLNRSSSHRLAMLQNMMNSLIEHEVIKTTLPKAKELRRVIEPMITLAKQDSVANRRLAFNRLRERASVTKLFNVLGPHFRLRPGGYTRILKMGFRVGDNAPMALVELVDRPGVATEENNSASAEQ.

This sequence belongs to the bacterial ribosomal protein bL17 family. As to quaternary structure, part of the 50S ribosomal subunit. Contacts protein L32.

This is Large ribosomal subunit protein bL17 from Verminephrobacter eiseniae (strain EF01-2).